Reading from the N-terminus, the 292-residue chain is Protein LicB (292 aa).

EamA domains follow at residues 70 to 139 (ALSG…LLAI) and 160 to 286 (LGWS…VTLY).

This is Protein LicB (licB) from Haemophilus influenzae (strain ATCC 51907 / DSM 11121 / KW20 / Rd).